A 1229-amino-acid polypeptide reads, in one-letter code: Membrane-anchored lipid-binding protein SIP3 (1229 aa).

The Cytoplasmic portion of the chain corresponds to 1 to 1066; it reads MSVHGRDPKK…AEKFSRINRM (1066 aa). One can recognise a PH domain in the interval 309–423; it reads SPEKSGWLYM…WLIAFEATKK (115 aa). The 206-residue stretch at 771 to 976 folds into the VASt domain; sequence EYSITYNHEY…VLRYYLEKIG (206 aa). Residues 1067–1087 traverse the membrane as a helical segment; that stretch reads MVVGLLASIMINILLSEKASV. Over 1088–1229 the chain is Lumenal; the sequence is PYWSIKRAEK…ELEKLRPPIT (142 aa). A glycan (N-linked (GlcNAc...) asparagine) is linked at N1206.

It belongs to the SIP3 family. As to quaternary structure, interacts with SNF1.

The protein localises to the endoplasmic reticulum membrane. Functionally, may be involved in sterol transfer between intracellular membranes. The chain is Membrane-anchored lipid-binding protein SIP3 from Saccharomyces cerevisiae (strain ATCC 204508 / S288c) (Baker's yeast).